A 371-amino-acid chain; its full sequence is Maltose/maltodextrin import ATP-binding protein MalK (371 aa).

The 231-residue stretch at 4-234 folds into the ABC transporter domain; sequence VQLQNVTKAW…PADRFVAGFI (231 aa). 36 to 43 is an ATP binding site; it reads GPSGCGKS.

It belongs to the ABC transporter superfamily. Maltooligosaccharide importer (TC 3.A.1.1.1) family. As to quaternary structure, the complex is composed of two ATP-binding proteins (MalK), two transmembrane proteins (MalG and MalK) and a solute-binding protein (MalE).

Its subcellular location is the cell inner membrane. The enzyme catalyses D-maltose(out) + ATP + H2O = D-maltose(in) + ADP + phosphate + H(+). In terms of biological role, part of the ABC transporter complex MalEFGK involved in maltose/maltodextrin import. Responsible for energy coupling to the transport system. This chain is Maltose/maltodextrin import ATP-binding protein MalK, found in Escherichia coli O6:K15:H31 (strain 536 / UPEC).